The following is a 642-amino-acid chain: Kinesin-like protein KIN-7L (642 aa).

The 335-residue stretch at 3-337 (KISVAVRFRP…LQFASRAKCV (335 aa)) folds into the Kinesin motor domain. Residues 12-27 (PPTTAAPAADQSPSST) are compositionally biased toward low complexity. The segment at 12–33 (PPTTAAPAADQSPSSTGGDREW) is disordered. 94-101 (GQTSSGKT) lines the ATP pocket. 2 coiled-coil regions span residues 343 to 428 (VNEI…SNTS) and 540 to 612 (RQQL…FSQA).

Belongs to the TRAFAC class myosin-kinesin ATPase superfamily. Kinesin family. KIN-7 subfamily.

The sequence is that of Kinesin-like protein KIN-7L from Oryza sativa subsp. japonica (Rice).